Reading from the N-terminus, the 260-residue chain is Cytosolic Fe-S cluster assembly factor Nubp2 homolog (260 aa).

14–21 (GKGGVGKS) contacts ATP. The [4Fe-4S] cluster site is built by cysteine 188 and cysteine 191.

It belongs to the Mrp/NBP35 ATP-binding proteins family. NUBP2/CFD1 subfamily. As to quaternary structure, heterotetramer of 2 Nubp1 and 2 Nubp2 chains. Requires [4Fe-4S] cluster as cofactor.

The protein resides in the cytoplasm. Component of the cytosolic iron-sulfur (Fe/S) protein assembly (CIA) machinery. Required for maturation of extramitochondrial Fe-S proteins. The Nubp1-Nubp2 heterotetramer forms a Fe-S scaffold complex, mediating the de novo assembly of an Fe-S cluster and its transfer to target apoproteins. This Drosophila simulans (Fruit fly) protein is Cytosolic Fe-S cluster assembly factor Nubp2 homolog.